The sequence spans 1123 residues: Polyprotein of EF-Ts, chloroplastic (1123 aa).

A chloroplast-targeting transit peptide spans 1 to 73; sequence MTPVVHCSVG…SSARRPRTLS (73 aa). A disordered region spans residues 68 to 141; the sequence is RPRTLSAATV…MPPLNDEDLV (74 aa). The segment covering 94–103 has biased composition (acidic residues); it reads TSEESSEDTA. Over residues 106–119 the composition is skewed to low complexity; it reads TAEASEQAEASTSS. An S1 motif 1 domain is found at 143–212; that stretch reads GASFTGKVRS…ETGRISLTMR (70 aa). The interval 213–258 is disordered; the sequence is TGGDYVKPKTETPKAASGGRNTTATTSRGSPRQTRERDEAKSMGET. Over residues 231–244 the composition is skewed to polar residues; it reads GRNTTATTSRGSPR. Residues 245–254 show a composition bias toward basic and acidic residues; it reads QTRERDEAKS. One can recognise an S1 motif 2 domain in the interval 263 to 331; the sequence is GQFLDGVVKN…VRGQVTLTMK (69 aa). Disordered regions lie at residues 443 to 670 and 894 to 923; these read KTES…SEKT and VAAQ…EEKK. The segment covering 486-501 has biased composition (polar residues); sequence EGSVTTEPTEAASTEF. Positions 551–587 are enriched in low complexity; it reads SVASTESVTAVVEESAPVSSVAIEVPAPEASEASAQE. The segment covering 630-639 has biased composition (acidic residues); it reads KPDEPEESLI. 2 stretches are compositionally biased toward low complexity: residues 657-670 and 894-903; these read AAVP…SEKT and VAAQTAAKAP. The segment covering 908–923 has biased composition (basic and acidic residues); that stretch reads PKDDKPEETAETEEKK.

It belongs to the EF-Ts family. Component of the chloroplast ribosome 30S and 70S subunits, as well as polysomes. As to quaternary structure, component of the chloroplast ribosome 70S subunit, and at low levels, present in polysomes. In terms of assembly, associates transiently with chloroplast polysomes.

It localises to the plastid. The protein localises to the chloroplast. Its function is as follows. Associates with the EF-Tu.GDP complex and induces the exchange of GDP to GTP. It remains bound to the aminoacyl-tRNA.EF-Tu.GTP complex up to the GTP hydrolysis stage on the ribosome. Functionally, binds to psbD and psbA 5'-untranslated regions (UTRs) in vitro. This Oryza sativa subsp. indica (Rice) protein is Polyprotein of EF-Ts, chloroplastic.